The following is a 222-amino-acid chain: Uclacyanin-3 (222 aa).

A signal peptide spans 1–21; the sequence is MGSTVAAALLLFLAAVPAVFA. Positions 22 to 120 constitute a Phytocyanin domain; that stretch reads ATFKVGDISG…GMKLAVPVLA (99 aa). The Cu cation site is built by His61, Cys102, His107, and Met112. Residues Cys74 and Cys108 are joined by a disulfide bond. A disordered region spans residues 121 to 198; that stretch reads AAPSPSTPSS…APLPPSLSPN (78 aa). Composition is skewed to pro residues over residues 125 to 172 and 185 to 195; these read PSTP…PSAS and TPPPAPLPPSL. The GPI-anchor amidated asparagine moiety is linked to residue Asn198. The propeptide at 199–222 is removed in mature form; that stretch reads AASKGVMSYGIIGVTMILMYAVMT.

It localises to the cell membrane. Probably acts as an electron carrier involved in oxygen activation and/or lignin formation. The chain is Uclacyanin-3 (UCC3) from Arabidopsis thaliana (Mouse-ear cress).